The sequence spans 426 residues: D-tagatose-1,6-bisphosphate aldolase subunit KbaZ (426 aa).

The protein belongs to the GatZ/KbaZ family. KbaZ subfamily. In terms of assembly, forms a complex with KbaY.

Its pathway is carbohydrate metabolism; D-tagatose 6-phosphate degradation; D-glyceraldehyde 3-phosphate and glycerone phosphate from D-tagatose 6-phosphate: step 2/2. In terms of biological role, component of the tagatose-1,6-bisphosphate aldolase KbaYZ that is required for full activity and stability of the Y subunit. Could have a chaperone-like function for the proper and stable folding of KbaY. When expressed alone, KbaZ does not show any aldolase activity. The protein is D-tagatose-1,6-bisphosphate aldolase subunit KbaZ of Escherichia coli O6:H1 (strain CFT073 / ATCC 700928 / UPEC).